The primary structure comprises 573 residues: Putative ATP-dependent RNA helicase R563 (573 aa).

In terms of domain architecture, Helicase ATP-binding spans 57-233 (INPKTPYKGL…ALTMNLLVRN (177 aa)). Position 70–77 (70–77 (HRIGAGKT)) interacts with ATP. A DEAH box motif is present at residues 179-182 (DEVH). The Helicase C-terminal domain maps to 374–551 (KILRKIKRCN…AFEKALKEAA (178 aa)).

This sequence belongs to the DEAD box helicase family. DEAH subfamily.

It is found in the virion. The catalysed reaction is ATP + H2O = ADP + phosphate + H(+). This is Putative ATP-dependent RNA helicase R563 from Acanthamoeba polyphaga mimivirus (APMV).